The chain runs to 415 residues: Multidrug resistance protein MdtA (415 aa).

A signal peptide spans 1-21; that stretch reads MKGSYKSRWVIVIVVVIAAIA. Disordered stretches follow at residues 32 to 60 and 392 to 415; these read SRSA…GPLA and EAQS…GARS. The span at 399–415 shows a compositional bias: basic and acidic residues; it reads PEEKATSREYAKKGARS.

It belongs to the membrane fusion protein (MFP) (TC 8.A.1) family. As to quaternary structure, part of a tripartite efflux system composed of MdtA, MdtB and MdtC.

It is found in the cell inner membrane. Functionally, the MdtABC tripartite complex confers resistance against novobiocin and deoxycholate. This chain is Multidrug resistance protein MdtA, found in Escherichia coli (strain K12 / MC4100 / BW2952).